The primary structure comprises 60 residues: uncharacterized protein (60 aa).

This is an uncharacterized protein from Ureaplasma parvum serovar 3 (strain ATCC 700970).